The following is a 269-amino-acid chain: Surfeit locus protein 4 (269 aa).

5 consecutive transmembrane segments (helical) span residues 64-84, 92-112, 179-199, 203-223, and 242-262; these read FLAT…CVLV, YACF…SILW, FFSI…AVGF, LAAL…NAFW, and TTSV…GVSM. The Di-lysine motif signature appears at 266 to 269; that stretch reads KKEW.

Belongs to the SURF4 family.

The protein localises to the endoplasmic reticulum membrane. Its subcellular location is the endoplasmic reticulum-Golgi intermediate compartment membrane. It localises to the golgi apparatus membrane. Endoplasmic reticulum cargo receptor that mediates the export of lipoproteins by recruiting cargos into COPII vesicles to facilitate their secretion. The chain is Surfeit locus protein 4 from Danio rerio (Zebrafish).